A 243-amino-acid polypeptide reads, in one-letter code: Ribosomal RNA small subunit methyltransferase J (243 aa).

S-adenosyl-L-methionine is bound by residues 112-113 and Asp164; that span reads ER.

Belongs to the methyltransferase superfamily. RsmJ family.

It is found in the cytoplasm. The catalysed reaction is guanosine(1516) in 16S rRNA + S-adenosyl-L-methionine = N(2)-methylguanosine(1516) in 16S rRNA + S-adenosyl-L-homocysteine + H(+). Specifically methylates the guanosine in position 1516 of 16S rRNA. This is Ribosomal RNA small subunit methyltransferase J from Legionella pneumophila (strain Paris).